The chain runs to 563 residues: Arginine--tRNA ligase (563 aa).

Residues 121–131 (PNIAKPFSIGH) carry the 'HIGH' region motif.

The protein belongs to the class-I aminoacyl-tRNA synthetase family. Monomer.

Its subcellular location is the cytoplasm. It catalyses the reaction tRNA(Arg) + L-arginine + ATP = L-arginyl-tRNA(Arg) + AMP + diphosphate. The protein is Arginine--tRNA ligase of Streptococcus pneumoniae (strain CGSP14).